A 604-amino-acid chain; its full sequence is Dopamine receptor 3 (604 aa).

Over 1-23 (MLTGQHHIPGIESPLMVVLWRVA) the chain is Extracellular. A helical membrane pass occupies residues 24–44 (AGVFLPLVPTMAVFGNVLVIL). The Cytoplasmic portion of the chain corresponds to 45 to 58 (SVYRERNLQTVTNM). A helical membrane pass occupies residues 59 to 79 (LIVSLAVSDLFVAIGVMSFGV). At 80 to 96 (YYEWNGFKWGLGSFFCH) the chain is on the extracellular side. C95 and C170 are disulfide-bonded. Residues 97 to 117 (VYQALDVACSTASILNLLAIS) traverse the membrane as a helical segment. Residues 118–141 (LDRYIAIGHPISYAQYGARGGRAM) lie on the Cytoplasmic side of the membrane. A helical transmembrane segment spans residues 142 to 162 (ISITIVWGVSCAVALPLLLGV). The Extracellular segment spans residues 163–179 (NPMENDQCELANPWFNM). The chain crosses the membrane as a helical span at residues 180–200 (ISSIFSFFIPCIAMIILYTII). Over 201–520 (FRRLRQRERA…TKQMRREHKA (320 aa)) the chain is Cytoplasmic. Residues 399 to 430 (SIQDEKKMNSRPPENPFAHQNGTNKQRLLPNP) are disordered. Residues 521 to 541 (TVTLAVVLAVFLFCWLPFFIL) form a helical membrane-spanning segment. The Extracellular portion of the chain corresponds to 542-559 (HLSNSICLVIDSNSDCIG). The chain crosses the membrane as a helical span at residues 560–580 (FLPLYLATWLGYLNSSLNPLI). The Cytoplasmic portion of the chain corresponds to 581 to 604 (YTVFDQRFRNAFRNILSCGFFKKR).

The protein belongs to the G-protein coupled receptor 1 family.

It is found in the cell membrane. In terms of biological role, receptor for dopamine. The activity of this receptor is mediated by G proteins which activate adenylyl cyclase. In terms of antagonist responses, would be classed with the D2-like dopamine receptor group. Mediates the effect of dopamine on the inhibition of locomotion. Acts as an antagonist of dop-1. In Caenorhabditis briggsae, this protein is Dopamine receptor 3.